The sequence spans 345 residues: Uroporphyrinogen decarboxylase (345 aa).

Residues 27–31 (RQAGR), aspartate 77, tyrosine 152, serine 207, and histidine 323 contribute to the substrate site.

The protein belongs to the uroporphyrinogen decarboxylase family. As to quaternary structure, homodimer.

The protein resides in the cytoplasm. It carries out the reaction uroporphyrinogen III + 4 H(+) = coproporphyrinogen III + 4 CO2. The protein operates within porphyrin-containing compound metabolism; protoporphyrin-IX biosynthesis; coproporphyrinogen-III from 5-aminolevulinate: step 4/4. In terms of biological role, catalyzes the decarboxylation of four acetate groups of uroporphyrinogen-III to yield coproporphyrinogen-III. In Maricaulis maris (strain MCS10) (Caulobacter maris), this protein is Uroporphyrinogen decarboxylase.